Consider the following 955-residue polypeptide: 26S proteasome non-ATPase regulatory subunit 1 (955 aa).

The interval 279-313 (PGSTNTGTVPGSEKDSDAMEAEEKPGSTCVGKSAE) is disordered. A compositionally biased stretch (basic and acidic residues) spans 290–303 (SEKDSDAMEAEEKP). 10 PC repeats span residues 403 to 436 (TATA…PGSA), 441 to 474 (GGLY…DIVR), 476 to 510 (GGSL…VTGE), 511 to 545 (AAGL…EKIL), 547 to 580 (GLAV…ILRR), 581 to 616 (SGMY…DVRR), 617 to 649 (AAVE…PHVR), 651 to 685 (GAAM…YVRQ), 686 to 726 (GALI…DVMA), and 729 to 761 (GAIL…PSVV). Disordered regions lie at residues 839 to 879 (AKKK…NFQL) and 932 to 955 (AHGP…YIDD). 2 stretches are compositionally biased toward basic and acidic residues: residues 842–854 (KEKE…KEEE) and 861–874 (TEKK…KEPE). The span at 938 to 955 (EEEEQEPEPPEPFEYIDD) shows a compositional bias: acidic residues.

This sequence belongs to the proteasome subunit S1 family. Component of the 19S proteasome regulatory particle complex. The 26S proteasome consists of a 20S core particle (CP) and two 19S regulatory subunits (RP). The regulatory particle is made of a lid composed of 9 subunits, a base containing 6 ATPases and few additional components including PSMD1. Interacts with ADRM1.

In terms of biological role, component of the 26S proteasome, a multiprotein complex involved in the ATP-dependent degradation of ubiquitinated proteins. This complex plays a key role in the maintenance of protein homeostasis by removing misfolded or damaged proteins, which could impair cellular functions, and by removing proteins whose functions are no longer required. Therefore, the proteasome participates in numerous cellular processes, including cell cycle progression, apoptosis, or DNA damage repair. This chain is 26S proteasome non-ATPase regulatory subunit 1 (PSMD1), found in Gallus gallus (Chicken).